The sequence spans 394 residues: Phosphatidylinositol 4-phosphate 5-kinase-like protein 1 (394 aa).

Residues 36–393 (DKQSRLGLFE…RLCQWVEAHT (358 aa)) form the PIPK domain.

Heterodimerizes with other type I phosphatidylinositol 4-phosphate 5-kinase.

Its subcellular location is the cytoplasm. It is found in the membrane. It catalyses the reaction a 1,2-diacyl-sn-glycero-3-phospho-(1D-myo-inositol 4-phosphate) + ATP = a 1,2-diacyl-sn-glycero-3-phospho-(1D-myo-inositol-4,5-bisphosphate) + ADP + H(+). Its function is as follows. May act as a scaffold to localize and regulate type I PI(4)P 5-kinases to specific compartments within the cell, where they generate PI(4,5)P2 for actin nucleation, signaling and scaffold protein recruitment and conversion to PI(3,4,5)P3. The polypeptide is Phosphatidylinositol 4-phosphate 5-kinase-like protein 1 (PIP5KL1) (Homo sapiens (Human)).